The primary structure comprises 126 residues: RutC family protein bbp_334 (126 aa).

Belongs to the RutC family.

The protein is RutC family protein bbp_334 of Buchnera aphidicola subsp. Baizongia pistaciae (strain Bp).